The sequence spans 582 residues: Acylamino-acid-releasing enzyme (582 aa).

Active-site charge relay system residues include Ser-445, Asp-524, and His-556.

Belongs to the peptidase S9C family.

The protein resides in the cytoplasm. It catalyses the reaction Cleavage of an N-acetyl or N-formyl amino acid from the N-terminus of a polypeptide.. This enzyme catalyzes the hydrolysis of the N-terminal peptide bond of an N-acetylated peptide to generate an N-acetylated amino acid and a peptide with a free N-terminus. This is Acylamino-acid-releasing enzyme from Aeropyrum pernix (strain ATCC 700893 / DSM 11879 / JCM 9820 / NBRC 100138 / K1).